A 216-amino-acid polypeptide reads, in one-letter code: Noggin-1 (216 aa).

An N-terminal signal peptide occupies residues 1 to 18; it reads MDFPRFLLSAYLLLLSFA. N-linked (GlcNAc...) asparagine glycosylation is present at Asn-55.

The protein belongs to the noggin family. In terms of assembly, homodimer; disulfide-linked.

It localises to the secreted. Its function is as follows. Inhibitor of bone morphogenetic proteins (BMP) signaling. May play an important role in the dorsoventral patterning of the embryo. The polypeptide is Noggin-1 (nog1) (Danio rerio (Zebrafish)).